A 318-amino-acid polypeptide reads, in one-letter code: Ubiquitin-like domain-containing CTD phosphatase 1 (318 aa).

Residues 3 to 81 form the Ubiquitin-like domain; that stretch reads LSLIIKWGGQ…IMMMGTREES (79 aa). Residues 133-294 enclose the FCP1 homology domain; it reads PREGKKLLVL…LKLSQYLKEI (162 aa). The Mg(2+) site is built by Asp-143, Asp-145, and Asp-253.

It depends on Mg(2+) as a cofactor.

It localises to the nucleus. The catalysed reaction is O-phospho-L-seryl-[protein] + H2O = L-seryl-[protein] + phosphate. It carries out the reaction O-phospho-L-threonyl-[protein] + H2O = L-threonyl-[protein] + phosphate. In terms of biological role, dephosphorylates 26S nuclear proteasomes, thereby decreasing their proteolytic activity. Recruited to the 19S regulatory particle of the 26S proteasome where it dephosphorylates 19S component psmc2 which impairs psmc2 ATPase activity and disrupts 26S proteasome assembly. Has also been reported to stimulate the proteolytic activity of the 26S proteasome. This Xenopus tropicalis (Western clawed frog) protein is Ubiquitin-like domain-containing CTD phosphatase 1 (ublcp1).